A 393-amino-acid polypeptide reads, in one-letter code: Chorismate synthase (393 aa).

Positions 40 and 46 each coordinate NADP(+). Residues 129–131 (RSS), 249–250 (QA), Gly-301, 316–320 (KPIPT), and Arg-342 each bind FMN.

Belongs to the chorismate synthase family. In terms of assembly, homotetramer. FMNH2 serves as cofactor.

It catalyses the reaction 5-O-(1-carboxyvinyl)-3-phosphoshikimate = chorismate + phosphate. The protein operates within metabolic intermediate biosynthesis; chorismate biosynthesis; chorismate from D-erythrose 4-phosphate and phosphoenolpyruvate: step 7/7. Catalyzes the anti-1,4-elimination of the C-3 phosphate and the C-6 proR hydrogen from 5-enolpyruvylshikimate-3-phosphate (EPSP) to yield chorismate, which is the branch point compound that serves as the starting substrate for the three terminal pathways of aromatic amino acid biosynthesis. This reaction introduces a second double bond into the aromatic ring system. In Geobacter metallireducens (strain ATCC 53774 / DSM 7210 / GS-15), this protein is Chorismate synthase.